Consider the following 144-residue polypeptide: Large ribosomal subunit protein uL15 (144 aa).

The segment at 1–53 (MRLNTLSPAEGAKHNAKRLGRGIGSGLGKTSGRGHKGQKARTGGGVRRGFEGG) is disordered. Residues 21–31 (RGIGSGLGKTS) are compositionally biased toward gly residues.

It belongs to the universal ribosomal protein uL15 family. As to quaternary structure, part of the 50S ribosomal subunit.

Its function is as follows. Binds to the 23S rRNA. The sequence is that of Large ribosomal subunit protein uL15 from Histophilus somni (strain 129Pt) (Haemophilus somnus).